The chain runs to 190 residues: Proline-rich protein 3 (190 aa).

Disordered stretches follow at residues 1–94, 110–130, and 142–161; these read MPKR…GLGP, PPFP…KEAR, and KNTY…SDRP. A compositionally biased stretch (pro residues) spans 37-48; the sequence is MGPPSLLGPPPM. The segment at 157–185 adopts a C3H1-type zinc-finger fold; that stretch reads KSDRPVCRHFSKKGHCRYEDHCAFYHPGV.

This is Proline-rich protein 3 (Prr3) from Mus musculus (Mouse).